The primary structure comprises 133 residues: MIWFLAFILFLAAGELVSSSGLLNCEPSEIAYEEITRQGQKSTNTLCKCKYEPYKFSTATSKDKTTVTVQYKCKQVRPCVYGQKCQSLEDGPQEKALKTHCTCAKGQQCHSTPEHADESRIFGDTKYYSFVCV.

A signal peptide spans 1–19; the sequence is MIWFLAFILFLAAGELVSS.

This sequence belongs to the scoloptoxin-11 family. Post-translationally, contains 10 disulfide bonds. Expressed by the venom gland.

The protein resides in the secreted. The polypeptide is U-scoloptoxin(11)-Sm1a (Scolopendra morsitans (Tanzanian blue ringleg centipede)).